The sequence spans 530 residues: AP-4 complex subunit mu (530 aa).

Residues 164–187 form a disordered region; it reads PKQGVKPIHSGSKNSSSGGSSLST. Residues 173–186 are compositionally biased toward low complexity; that stretch reads SGSKNSSSGGSSLS. Residues 227–527 enclose the MHD domain; that stretch reads DNEIYIDLCE…ITDSKSFVSR (301 aa).

This sequence belongs to the adaptor complexes medium subunit family. As to quaternary structure, may be part of the adaptor protein complex 4 (AP-4), a heterotetramer composed of two large adaptins (epsilon-type subunitand beta-type subunit), a medium adaptin (mu-type subunit) and a small adaptin (sigma-type).

It is found in the golgi apparatus. The protein localises to the trans-Golgi network membrane. The protein resides in the early endosome. Its function is as follows. Probable component of an adaptor protein complex. Adaptor protein complexes are vesicle coat components involved both in vesicle formation and cargo selection. They control the vesicular transport of proteins in different trafficking pathways. This is AP-4 complex subunit mu (apm4) from Dictyostelium discoideum (Social amoeba).